The following is a 135-amino-acid chain: Holo-[acyl-carrier-protein] synthase (135 aa).

Mg(2+) is bound by residues D8 and E57.

This sequence belongs to the P-Pant transferase superfamily. AcpS family. The cofactor is Mg(2+).

It localises to the cytoplasm. It catalyses the reaction apo-[ACP] + CoA = holo-[ACP] + adenosine 3',5'-bisphosphate + H(+). In terms of biological role, transfers the 4'-phosphopantetheine moiety from coenzyme A to a Ser of acyl-carrier-protein. In Xanthobacter autotrophicus (strain ATCC BAA-1158 / Py2), this protein is Holo-[acyl-carrier-protein] synthase.